Reading from the N-terminus, the 310-residue chain is 2-phospho-L-lactate transferase (310 aa).

The 7,8-didemethyl-8-hydroxy-5-deazariboflavin site is built by aspartate 50 and arginine 89.

Belongs to the CofD family. As to quaternary structure, homodimer. Mg(2+) is required as a cofactor.

It carries out the reaction (2S)-lactyl-2-diphospho-5'-guanosine + 7,8-didemethyl-8-hydroxy-5-deazariboflavin = oxidized coenzyme F420-0 + GMP + H(+). Its pathway is cofactor biosynthesis; coenzyme F420 biosynthesis. Functionally, catalyzes the transfer of the 2-phospholactate moiety from (2S)-lactyl-2-diphospho-5'-guanosine to 7,8-didemethyl-8-hydroxy-5-deazariboflavin (FO) with the formation of oxidized coenzyme F420-0 and GMP. This is 2-phospho-L-lactate transferase from Methanopyrus kandleri (strain AV19 / DSM 6324 / JCM 9639 / NBRC 100938).